The chain runs to 201 residues: Keratin-associated protein 4-12 (201 aa).

30 consecutive repeat copies span residues 5–9 (CCGSV), 20–24 (CCRPS), 25–29 (CCQTT), 30–34 (CCRTT), 35–39 (CCRPS), 40–44 (CCVSS), 45–49 (CCRPQ), 50–54 (CCQSV), 55–59 (CCQPT), 60–64 (CCRPS), 65–69 (CCQTT), 70–74 (CCRTT), 75–79 (CCRPS), 80–84 (CCVSS), 85–89 (CCRPQ), 90–94 (CCQSV), 95–99 (CCQPT), 100–104 (CCRPS), 105–109 (CCQTT), 110–114 (CCRTT), 115–119 (CCRPS), 120–124 (CCVSS), 125–129 (CCRPQ), 130–134 (CCQSV), 135–139 (CCQPT), 140–144 (CCRPS), 145–149 (CCISS), 155–159 (CCESS), 160–164 (CCRPC), and 165–169 (CCLRP). Residues 5 to 169 (CCGSVCSDQG…CCRPCCCLRP (165 aa)) are 31 X 5 AA repeats of C-C-[GRQVIL]-[SPTR]-[VSTQPC].

Belongs to the KRTAP type 4 family. In terms of assembly, interacts with hair keratins. Expressed in the hair follicles.

Functionally, in the hair cortex, hair keratin intermediate filaments are embedded in an interfilamentous matrix, consisting of hair keratin-associated proteins (KRTAP), which are essential for the formation of a rigid and resistant hair shaft through their extensive disulfide bond cross-linking with abundant cysteine residues of hair keratins. The matrix proteins include the high-sulfur and high-glycine-tyrosine keratins. In Homo sapiens (Human), this protein is Keratin-associated protein 4-12 (KRTAP4-12).